We begin with the raw amino-acid sequence, 487 residues long: 1-hydroxycarotenoid 3,4-desaturase (487 aa).

FAD-binding positions include G12, E31, K39, 55–56, V247, N275, L431, G461, and 468–469; these read SL and GI.

Belongs to the carotenoid/retinoid oxidoreductase family. In terms of assembly, monomer.

The catalysed reaction is rhodopin + A = (3E)-3,4-didehydrorhodopin + AH2. The enzyme catalyses 1'-hydroxy-gamma-carotene + A = 1'-hydroxytorulene + AH2. It catalyses the reaction 1-hydroxy-all-trans-1,2-dihydro-neurosporene + A = demethylspheroidene + AH2. It carries out the reaction 1,1'-dihydroxy-1,1',2,2'-tetrahydroneurosporene + A = 1'-hydroxy-demethylspheroidene + AH2. The catalysed reaction is 1,1'-dihydroxy-1,1',2,2'-tetrahydrolycopene + A = 1,1'-dihydroxy-3,4-didehydro-1,2-dihydrolycopene + AH2. It functions in the pathway carotenoid biosynthesis. Catalyzes the introduction of a C-3,4 double bond into 1'-hydroxy-gamma-carotene and rhodopin (1-hydroxylycopene) to yield 1'-hydroxytorulene and (3E)-3,4-didehydrorhodopin, respectively. Can also use 1-hydroxy-all-trans-1,2-dihydro-neurosporene, 1,1'-dihydroxy-1,1',2,2'-tetrahydroneurosporene and 1,1'-dihydroxy-1,1',2,2'-tetrahydrolycopene. Probably involved in the synthesis of myxol, a gamma-carotene derivative. May use FAD as a proton acceptor. The polypeptide is 1-hydroxycarotenoid 3,4-desaturase (Nonlabens dokdonensis (strain DSM 17205 / KCTC 12402 / DSW-6) (Donghaeana dokdonensis)).